Reading from the N-terminus, the 236-residue chain is Small ribosomal subunit protein uS2c (236 aa).

Belongs to the universal ribosomal protein uS2 family.

It is found in the plastid. The protein resides in the chloroplast. This is Small ribosomal subunit protein uS2c (rps2) from Lotus japonicus (Lotus corniculatus var. japonicus).